A 194-amino-acid chain; its full sequence is Peptidyl-tRNA hydrolase (194 aa).

Tyrosine 16 is a binding site for tRNA. Histidine 21 functions as the Proton acceptor in the catalytic mechanism. Positions 67, 69, and 115 each coordinate tRNA.

It belongs to the PTH family. As to quaternary structure, monomer.

Its subcellular location is the cytoplasm. It catalyses the reaction an N-acyl-L-alpha-aminoacyl-tRNA + H2O = an N-acyl-L-amino acid + a tRNA + H(+). Functionally, hydrolyzes ribosome-free peptidyl-tRNAs (with 1 or more amino acids incorporated), which drop off the ribosome during protein synthesis, or as a result of ribosome stalling. In terms of biological role, catalyzes the release of premature peptidyl moieties from peptidyl-tRNA molecules trapped in stalled 50S ribosomal subunits, and thus maintains levels of free tRNAs and 50S ribosomes. This is Peptidyl-tRNA hydrolase from Shigella dysenteriae serotype 1 (strain Sd197).